The following is a 492-amino-acid chain: Catalase isozyme 2 (492 aa).

Residues histidine 65 and asparagine 138 contribute to the active site. Residue tyrosine 348 coordinates heme.

It belongs to the catalase family. In terms of assembly, homotetramer. Heme is required as a cofactor.

It localises to the peroxisome. It carries out the reaction 2 H2O2 = O2 + 2 H2O. Its function is as follows. Occurs in almost all aerobically respiring organisms and serves to protect cells from the toxic effects of hydrogen peroxide. This Solanum lycopersicum (Tomato) protein is Catalase isozyme 2 (CAT2).